The chain runs to 24 residues: General odorant-binding protein (24 aa).

Belongs to the PBP/GOBP family. In terms of assembly, homodimer. In terms of tissue distribution, antenna.

In terms of biological role, present in the aqueous fluid surrounding olfactory sensory dendrites and are thought to aid in the capture and transport of hydrophobic odorants into and through this fluid. This is General odorant-binding protein from Antheraea polyphemus (Polyphemus moth).